The following is a 144-amino-acid chain: L-fucose mutarotase (144 aa).

Histidine 22 functions as the Proton donor in the catalytic mechanism. Substrate contacts are provided by residues aspartate 30, arginine 109, and 131–133 (YGN).

It belongs to the RbsD / FucU family. FucU mutarotase subfamily. In terms of assembly, homodecamer.

It is found in the cytoplasm. The catalysed reaction is alpha-L-fucose = beta-L-fucose. It functions in the pathway carbohydrate metabolism; L-fucose metabolism. Functionally, involved in the anomeric conversion of L-fucose. This chain is L-fucose mutarotase, found in Haemophilus influenzae (strain PittGG).